The primary structure comprises 256 residues: MIPSDVSFNVLESWCGTMERIVIGETRINLRTELRNHGLSGFVLGERMKLMDYIRRNPEFLTSLEPIVVSEGPLIVRMMSRASRKAEVGPMASVAGTISQLSLMHLMGKGSRCSIIDNGGDIALVNNRKITVGLYAGSSSLSGTVGFLLKPGGPRGVCTSSGTVGHSISFGRADSVTVFASEASTADALATSIANSANGPDDISAVENALERADDFREHFRGVMVVVGEHAGTVGRIPRLVMTDRKAVLGDLWDEV.

The protein belongs to the UPF0280 family.

This Methanothermobacter thermautotrophicus (strain ATCC 29096 / DSM 1053 / JCM 10044 / NBRC 100330 / Delta H) (Methanobacterium thermoautotrophicum) protein is UPF0280 protein MTH_727.